Here is a 418-residue protein sequence, read N- to C-terminus: Gamma-glutamyl phosphate reductase (418 aa).

It belongs to the gamma-glutamyl phosphate reductase family.

Its subcellular location is the cytoplasm. It catalyses the reaction L-glutamate 5-semialdehyde + phosphate + NADP(+) = L-glutamyl 5-phosphate + NADPH + H(+). Its pathway is amino-acid biosynthesis; L-proline biosynthesis; L-glutamate 5-semialdehyde from L-glutamate: step 2/2. Its function is as follows. Catalyzes the NADPH-dependent reduction of L-glutamate 5-phosphate into L-glutamate 5-semialdehyde and phosphate. The product spontaneously undergoes cyclization to form 1-pyrroline-5-carboxylate. In Marinobacter nauticus (strain ATCC 700491 / DSM 11845 / VT8) (Marinobacter aquaeolei), this protein is Gamma-glutamyl phosphate reductase.